A 550-amino-acid polypeptide reads, in one-letter code: Carboxylesterase 4A (550 aa).

The first 20 residues, M1–G20, serve as a signal peptide directing secretion. C88 and C116 are oxidised to a cystine. S221 serves as the catalytic Acyl-ester intermediate. A disulfide bridge connects residues C273 and C284. N276 carries N-linked (GlcNAc...) asparagine glycosylation. E353 serves as the catalytic Charge relay system. N-linked (GlcNAc...) asparagine glycosylation occurs at N386. Residue H465 is the Charge relay system of the active site.

The protein belongs to the type-B carboxylesterase/lipase family.

Its subcellular location is the secreted. Its function is as follows. Probable carboxylesterase. In Bos taurus (Bovine), this protein is Carboxylesterase 4A (CES4A).